The chain runs to 447 residues: N-succinylarginine dihydrolase (447 aa).

Substrate-binding positions include 19 to 28 (AGLSFGNEAS), N110, and 137 to 138 (HR). The active site involves E174. Position 213 (R213) interacts with substrate. H249 is an active-site residue. Substrate contacts are provided by D251 and N364. Catalysis depends on C370, which acts as the Nucleophile.

Belongs to the succinylarginine dihydrolase family. As to quaternary structure, homodimer.

The catalysed reaction is N(2)-succinyl-L-arginine + 2 H2O + 2 H(+) = N(2)-succinyl-L-ornithine + 2 NH4(+) + CO2. It participates in amino-acid degradation; L-arginine degradation via AST pathway; L-glutamate and succinate from L-arginine: step 2/5. Catalyzes the hydrolysis of N(2)-succinylarginine into N(2)-succinylornithine, ammonia and CO(2). This chain is N-succinylarginine dihydrolase, found in Yersinia pestis bv. Antiqua (strain Antiqua).